The chain runs to 290 residues: GTPase Era (290 aa).

The Era-type G domain occupies 2-169; that stretch reads KSGFVSIIGR…KDKIYENLNE (168 aa). Residues 10–17 are G1; the sequence is GRPSTGKS. Residue 10-17 coordinates GTP; it reads GRPSTGKS. The tract at residues 36–40 is G2; that stretch reads QTTRN. Positions 57-60 are G3; it reads DTPG. Residues 57–61 and 119–122 each bind GTP; these read DTPGF and NKID. The interval 119-122 is G4; that stretch reads NKID. Residues 148–150 are G5; that stretch reads ISA. The KH type-2 domain maps to 200 to 276; the sequence is LKEELPYSIY…NLFLQVKLRK (77 aa).

The protein belongs to the TRAFAC class TrmE-Era-EngA-EngB-Septin-like GTPase superfamily. Era GTPase family. In terms of assembly, monomer.

Its subcellular location is the cytoplasm. The protein resides in the cell inner membrane. In terms of biological role, an essential GTPase that binds both GDP and GTP, with rapid nucleotide exchange. Plays a role in 16S rRNA processing and 30S ribosomal subunit biogenesis and possibly also in cell cycle regulation and energy metabolism. The polypeptide is GTPase Era (Borrelia duttonii (strain Ly)).